Reading from the N-terminus, the 195-residue chain is uncharacterized protein (195 aa).

The next 4 membrane-spanning stretches (helical) occupy residues 89 to 106, 111 to 128, 149 to 168, and 172 to 194; these read SWISVLLIVTIIALPLLP, HLPLAVYLMVLAGYVWKR, VKISRVGAVYLLFLAVVLLL, and LNALVVLLLIAVSCAAFFLFLNI.

Its subcellular location is the cell membrane. This is an uncharacterized protein from Bacillus subtilis (strain 168).